A 518-amino-acid polypeptide reads, in one-letter code: U3 small nucleolar RNA-associated protein 15 homolog (518 aa).

A2 is modified (N-acetylalanine). 7 WD repeats span residues 36-75 (KEFGAVSKVDFSPQPPYNYAVTASSRIHIYGRYSQEPIKT), 78-117 (RFKDTAYCATFRQDGRLLVAGSEDGGVQLFDISGRAPLRQ), 120-159 (GHTKAVHTVDFTADKYHVVSGADDYTVKLWDIPNSKEILT), 162-202 (EHSD…SVLS), 204-242 (EHGQPVESVLLFPSGGLLVSAGGRYVKVWDMLKGGQLLV), 246-285 (NHHKTVTCLCLSSSGQRLLSGSLDRKVKVYSTTSYKVVHS), and 287-326 (DYAASILSLALAHEDETIVVGMTNGILSVKHRKSEAKKES). K249 participates in a covalent cross-link: Glycyl lysine isopeptide (Lys-Gly) (interchain with G-Cter in SUMO2).

As to quaternary structure, part of the small subunit (SSU) processome, composed of more than 70 proteins and the RNA chaperone small nucleolar RNA (snoRNA) U3. May be a component of the proposed t-UTP subcomplex of the ribosomal small subunit (SSU) processome containing at least UTP4, WDR43, HEATR1, UTP15, WDR75. Interacts directly with UTP4 and WDR43.

The protein resides in the nucleus. The protein localises to the nucleolus. Its function is as follows. Ribosome biogenesis factor. Involved in nucleolar processing of pre-18S ribosomal RNA. Required for optimal pre-ribosomal RNA transcription by RNA polymerase I. Part of the small subunit (SSU) processome, first precursor of the small eukaryotic ribosomal subunit. During the assembly of the SSU processome in the nucleolus, many ribosome biogenesis factors, an RNA chaperone and ribosomal proteins associate with the nascent pre-rRNA and work in concert to generate RNA folding, modifications, rearrangements and cleavage as well as targeted degradation of pre-ribosomal RNA by the RNA exosome. The sequence is that of U3 small nucleolar RNA-associated protein 15 homolog from Homo sapiens (Human).